The primary structure comprises 35 residues: Photosystem II reaction center protein Psb30 (35 aa).

The chain crosses the membrane as a helical span at residues L7–I27.

It belongs to the Psb30/Ycf12 family. PSII is composed of 1 copy each of membrane proteins PsbA, PsbB, PsbC, PsbD, PsbE, PsbF, PsbH, PsbI, PsbJ, PsbK, PsbL, PsbM, PsbT, PsbX, PsbY, PsbZ, Psb30/Ycf12, peripheral proteins PsbO, CyanoQ (PsbQ), PsbU, PsbV and a large number of cofactors. It forms dimeric complexes.

It is found in the cellular thylakoid membrane. Functionally, a core subunit of photosystem II (PSII), probably helps stabilize the reaction center. The protein is Photosystem II reaction center protein Psb30 of Synechococcus sp. (strain CC9311).